Consider the following 996-residue polypeptide: Receptor-like protein kinase HSL1 (996 aa).

The first 15 residues, methionine 1–serine 15, serve as a signal peptide directing secretion. Residues leucine 16 to valine 618 are Extracellular-facing. LRR repeat units follow at residues phenylalanine 59–leucine 83, serine 84–cysteine 107, serine 109–isoleucine 131, threonine 133–lysine 154, phenylalanine 155–asparagine 178, isoleucine 179–asparagine 203, threonine 205–leucine 228, serine 229–leucine 252, threonine 253–leucine 276, serine 278–arginine 299, valine 300–serine 323, asparagine 325–asparagine 347, serine 348–lysine 371, glutamate 373–cysteine 395, arginine 396–leucine 419, histidine 421–alanine 443, serine 444–leucine 467, aspartate 468–leucine 491, glutamate 493–tryptophan 515, lysine 516–leucine 539, valine 541–serine 562, and leucine 563–aspartate 586. Asparagine 93 and asparagine 97 each carry an N-linked (GlcNAc...) asparagine glycan. N-linked (GlcNAc...) asparagine glycans are attached at residues asparagine 143, asparagine 178, asparagine 186, and asparagine 203. Asparagine 262 is a glycosylation site (N-linked (GlcNAc...) asparagine). Residues asparagine 429 and asparagine 445 are each glycosylated (N-linked (GlcNAc...) asparagine). The N-linked (GlcNAc...) asparagine glycan is linked to asparagine 569. The chain crosses the membrane as a helical span at residues tryptophan 619–phenylalanine 639. Residues tyrosine 640–alanine 996 are Cytoplasmic-facing. A Protein kinase domain is found at leucine 676 to isoleucine 962. ATP-binding positions include isoleucine 682–valine 690 and lysine 704. Phosphotyrosine is present on residues tyrosine 764 and tyrosine 802. Aspartate 815 acts as the Proton acceptor in catalysis. Phosphoserine is present on serine 851. Phosphotyrosine occurs at positions 859 and 866. Threonine 867 bears the Phosphothreonine mark. The interval glutamate 967–alanine 996 is disordered. Positions aspartate 968–lysine 980 are enriched in basic and acidic residues.

It belongs to the protein kinase superfamily. Ser/Thr protein kinase family.

It localises to the cell membrane. It carries out the reaction L-seryl-[protein] + ATP = O-phospho-L-seryl-[protein] + ADP + H(+). The catalysed reaction is L-threonyl-[protein] + ATP = O-phospho-L-threonyl-[protein] + ADP + H(+). This chain is Receptor-like protein kinase HSL1 (HSL1), found in Arabidopsis thaliana (Mouse-ear cress).